Consider the following 608-residue polypeptide: Chaperone protein HtpG (608 aa).

The interval methionine 1–arginine 332 is a; substrate-binding. The b stretch occupies residues glutamate 333 to glutamine 536. Residues leucine 537–serine 608 form a c region.

This sequence belongs to the heat shock protein 90 family. In terms of assembly, homodimer.

The protein resides in the cytoplasm. Molecular chaperone. Has ATPase activity. In Campylobacter jejuni (strain RM1221), this protein is Chaperone protein HtpG.